Reading from the N-terminus, the 247-residue chain is uncharacterized protein (247 aa).

Helical transmembrane passes span 108–128 (WYIN…FLII), 136–156 (IFSV…NIIC), and 194–214 (GAKL…LFFI).

The protein resides in the membrane. This is an uncharacterized protein from Caenorhabditis elegans.